Consider the following 399-residue polypeptide: Yellow-related salivary protein M10 (399 aa).

Residues 1 to 18 form the signal peptide; that stretch reads MKFILSVLALASFQHVFC. 2 N-linked (GlcNAc...) asparagine glycosylation sites follow: Asn29 and Asn83.

It belongs to the major royal jelly protein family. As to expression, salivary gland (at protein level).

Its subcellular location is the secreted. Functionally, probably modulates blood feeding of sand flies on vertebrate species by binding and sequestering different mediators involved in the host response. Functions as a chemoattractant for host neutrophils; likely acts through a G-protein-coupled receptor and effect is dependent on calcium influx and phosphatidylinositol 3-kinases (PI3K) activity. Its function is as follows. (Microbial infection) Probably enhances infection caused by Leishmania species in the host through augmentation of host neutrophil recruitment into the skin. In Phlebotomus duboscqi (Sandfly), this protein is Yellow-related salivary protein M10.